Consider the following 350-residue polypeptide: Arabinogalactan endo-beta-1,4-galactanase (350 aa).

Residues 1–16 (MFASLLLAALPLLTHA) form the signal peptide. N-linked (GlcNAc...) asparagine glycosylation is present at Asn128. Catalysis depends on Glu152, which acts as the Proton donor. Glu262 serves as the catalytic Nucleophile.

This sequence belongs to the glycosyl hydrolase 53 family. Post-translationally, glycosylated.

It catalyses the reaction The enzyme specifically hydrolyzes (1-&gt;4)-beta-D-galactosidic linkages in type I arabinogalactans.. The chain is Arabinogalactan endo-beta-1,4-galactanase (gal1) from Aspergillus aculeatus.